The chain runs to 248 residues: ATP synthase subunit a (248 aa).

5 helical membrane-spanning segments follow: residues Gly-31–Gly-51, Val-90–Phe-110, Ile-129–Ser-149, Val-195–Phe-215, and Leu-216–Glu-236.

The protein belongs to the ATPase A chain family. In terms of assembly, F-type ATPases have 2 components, CF(1) - the catalytic core - and CF(0) - the membrane proton channel. CF(1) has five subunits: alpha(3), beta(3), gamma(1), delta(1), epsilon(1). CF(0) has four main subunits: a, b, b' and c.

It is found in the cellular thylakoid membrane. Functionally, key component of the proton channel; it plays a direct role in the translocation of protons across the membrane. This Synechococcus sp. (strain JA-3-3Ab) (Cyanobacteria bacterium Yellowstone A-Prime) protein is ATP synthase subunit a.